A 257-amino-acid chain; its full sequence is Hydroxyacylglutathione hydrolase (257 aa).

Zn(2+)-binding residues include His54, His56, Asp58, His59, His113, Asp137, and His175.

Belongs to the metallo-beta-lactamase superfamily. Glyoxalase II family. As to quaternary structure, monomer. It depends on Zn(2+) as a cofactor.

It carries out the reaction an S-(2-hydroxyacyl)glutathione + H2O = a 2-hydroxy carboxylate + glutathione + H(+). The protein operates within secondary metabolite metabolism; methylglyoxal degradation; (R)-lactate from methylglyoxal: step 2/2. In terms of biological role, thiolesterase that catalyzes the hydrolysis of S-D-lactoyl-glutathione to form glutathione and D-lactic acid. The polypeptide is Hydroxyacylglutathione hydrolase (Gloeothece citriformis (strain PCC 7424) (Cyanothece sp. (strain PCC 7424))).